The sequence spans 354 residues: Lysophosphatidic acid receptor 3 (354 aa).

At 1–31 (MNECHYDKRMDFFYNRSNTDTADEWTGTKLV) the chain is on the extracellular side. N-linked (GlcNAc...) asparagine glycosylation is present at N15. The helical transmembrane segment at 32-52 (IVLCVGTFFCLFIFFSNSLVI) threads the bilayer. At 53–67 (AAVITNRKFHFPFYY) the chain is on the cytoplasmic side. A helical transmembrane segment spans residues 68–88 (LLANLAAADFFAGIAYVFLMF). Topologically, residues 89–101 (NTGPVSKTLTVNR) are extracellular. Residues 102 to 124 (WFLRQGLLDTSLTASLANLLVIA) form a helical membrane-spanning segment. Residues 125–146 (VERHMSIMRMRVHSNLTKKRVT) are Cytoplasmic-facing. A helical membrane pass occupies residues 147 to 167 (LLILLVWAIAIFMGAVPTLGW). Residues 168–186 (NCLCNISACSSLAPIYSRS) are Extracellular-facing. A glycan (N-linked (GlcNAc...) asparagine) is linked at N172. A helical transmembrane segment spans residues 187–207 (YLIFWTVSNLLAFFIMVAVYV). Topologically, residues 208–240 (RIYMYVKRKTNVLSPHTSGSISRRRAPMKLMKT) are cytoplasmic. The chain crosses the membrane as a helical span at residues 241-261 (VMTVLGAFVVCWTPGLVVLLL). At 262 to 276 (DGLNCKQCNVQHVKR) the chain is on the extracellular side. A helical membrane pass occupies residues 277–295 (WFLLLALLNSVMNPIIYSY). Topologically, residues 296–354 (KDEDMYNTMRKMICCALQDSNTERRPSRNPSTIHSRSETGSQYLEDSISQGPVCNKNGS) are cytoplasmic. C309 carries S-palmitoyl cysteine lipidation. The interval 315–354 (SNTERRPSRNPSTIHSRSETGSQYLEDSISQGPVCNKNGS) is disordered. The span at 323 to 354 (RNPSTIHSRSETGSQYLEDSISQGPVCNKNGS) shows a compositional bias: polar residues.

Belongs to the G-protein coupled receptor 1 family. As to expression, most abundantly expressed in testes, kidney, and lung, with moderate levels in small intestine, and low levels in heart, stomach, spleen, and adult and perinatal brain. Little or no expression in embryonic brain, liver, or thymus.

It is found in the cell membrane. Receptor for lysophosphatidic acid (LPA), a mediator of diverse cellular activities. Seems to be coupled to the G(i)/G(o) and G(q) families of heteromeric G proteins. This is Lysophosphatidic acid receptor 3 (Lpar3) from Mus musculus (Mouse).